Here is a 382-residue protein sequence, read N- to C-terminus: Low-specificity L-threonine aldolase (382 aa).

Lys-214 carries the N6-(pyridoxal phosphate)lysine modification.

Belongs to the threonine aldolase family. As to quaternary structure, homotetramer. Pyridoxal 5'-phosphate is required as a cofactor.

The catalysed reaction is L-threonine = acetaldehyde + glycine. It catalyses the reaction L-allo-threonine = acetaldehyde + glycine. The protein operates within amino-acid degradation; L-threonine degradation via aldolase pathway; acetaldehyde and glycine from L-threonine: step 1/1. The chain is Low-specificity L-threonine aldolase (GLY1) from Eremothecium gossypii (strain ATCC 10895 / CBS 109.51 / FGSC 9923 / NRRL Y-1056) (Yeast).